The chain runs to 315 residues: Ribose-phosphate pyrophosphokinase (315 aa).

ATP is bound by residues 37 to 39 and 96 to 97; these read DGE and RQ. Residues histidine 131 and aspartate 170 each contribute to the Mg(2+) site. The active site involves lysine 194. D-ribose 5-phosphate-binding positions include arginine 196, aspartate 220, and 224–228; that span reads DTGGT.

This sequence belongs to the ribose-phosphate pyrophosphokinase family. Class I subfamily. As to quaternary structure, homohexamer. It depends on Mg(2+) as a cofactor.

It localises to the cytoplasm. It catalyses the reaction D-ribose 5-phosphate + ATP = 5-phospho-alpha-D-ribose 1-diphosphate + AMP + H(+). It functions in the pathway metabolic intermediate biosynthesis; 5-phospho-alpha-D-ribose 1-diphosphate biosynthesis; 5-phospho-alpha-D-ribose 1-diphosphate from D-ribose 5-phosphate (route I): step 1/1. Functionally, involved in the biosynthesis of the central metabolite phospho-alpha-D-ribosyl-1-pyrophosphate (PRPP) via the transfer of pyrophosphoryl group from ATP to 1-hydroxyl of ribose-5-phosphate (Rib-5-P). This is Ribose-phosphate pyrophosphokinase from Photorhabdus laumondii subsp. laumondii (strain DSM 15139 / CIP 105565 / TT01) (Photorhabdus luminescens subsp. laumondii).